We begin with the raw amino-acid sequence, 340 residues long: Sulfotransferase ppzF (340 aa).

It participates in secondary metabolite biosynthesis. Functionally, sulfotransferase; part of the gene cluster that mediates the biosynthesis of pyrrolopyrazines, secondary metabolites showing insecticidal activity. The role of ppzF within the pathway has still to be determined. The single multifunctional NRPS ppzA is sufficient to produce peramine via condensation of 1-pyrroline-5-carboxylate and arginine, N-methylation of the alpha-amino group of arginine and reduction of the thioester and the cyclization to form an iminium ion resulting in release from the peptide synthetase. Deprotonation of this intermediate and oxidation of the pyrroline ring would give rise to peramine. In Epichloe species that produce only peramine, the peramine synthetase gene is not localized in a gene cluster, in contrast to Metarhizium species that contain additional pyrrolopyrazine biosynthesis genes. The 2-oxoglutarate-Fe(II) type oxidoreductase ppzC hydroxylates peramine to yield the newly identified compound 8-hydroxyperamine whereas ppzD converts L-proline into trans-4-hydroxy-L-proline, a precursor of peramine biosynthesis. In Metarhizium rileyi (strain RCEF 4871) (Nomuraea rileyi), this protein is Sulfotransferase ppzF.